The following is a 25-amino-acid chain: Kunitz-type serine protease inhibitor RsTIS5 (25 aa).

The BPTI/Kunitz inhibitor domain maps to 1-25 (EAEPKPFNPVCYEPKEVGPCKAYVP).

Its function is as follows. Serine protease inhibitor. Inhibits trypsin, elastase and plasmin. Does not inhibit kallikrein. The chain is Kunitz-type serine protease inhibitor RsTIS5 from Rhipicephalus sanguineus (Brown dog tick).